A 389-amino-acid polypeptide reads, in one-letter code: snRNA-activating protein complex subunit 1 (389 aa).

Positions 1–15 (MGTPAGAGTRPTGAG) are enriched in low complexity. Disordered stretches follow at residues 1–22 (MGTPAGAGTRPTGAGTVEGVGI), 245–276 (WHKERKNPSLKPKLKDGEENGEGSSEEPERCE), and 290–389 (SAVV…KRKC). Positions 20 to 187 (VGIPPGLQTD…QKFKDPNDRV (168 aa)) are SNAPC3-binding. The segment at 183-287 (PNDRVMKLIT…AVSLAKIKAK (105 aa)) is SNAPC4-binding. Over residues 245-262 (WHKERKNPSLKPKLKDGE) the composition is skewed to basic and acidic residues. Serine 308 and serine 309 each carry phosphoserine.

In terms of assembly, part of the SNAPc complex composed of 5 subunits: SNAPC1, SNAPC2, SNAPC3, SNAPC4 and SNAPC5. SNAPC1 interacts with SNAPC3, SNAPC4 and TBP.

It localises to the nucleus. Its function is as follows. Part of the SNAPc complex required for the transcription of both RNA polymerase II and III small-nuclear RNA genes. Binds to the proximal sequence element (PSE), a non-TATA-box basal promoter element common to these 2 types of genes. Recruits TBP and BRF2 to the U6 snRNA TATA box. The polypeptide is snRNA-activating protein complex subunit 1 (Snapc1) (Mus musculus (Mouse)).